Here is a 1328-residue protein sequence, read N- to C-terminus: MSSMPKPERHAESLLDICHDTNSSPTDLMTVTKNQNIILQSISRSEEFDQDGDCSHSTLVNEEEDPSGGRQDWQPRTEGVEITVTFPRDVSPPQEMSQEDLKEKNLINSSLQEWAQAHAVSHPNEIETVELRKKKLTMRPLVLQKEESSRELCNVNLGFLLPRSCLELNISKSVTREDAPHFLKEQQRKSEEFSTSHMKYSGRSIKFLLPPLSLLPTRSGVLTIPQNHKFPKEKERNIPSLTSFVPKLSVSVRQSDELSPSNEPPGALVKSLMDPTLRSSDGFIWSRNMCSFPKTNHHRQCLEKEENWKSKEIEECNKIEITHFEKGQSLVSFENLKEGNIPAVREEDIDCHGSKTRKPEEENSQYLSSRKNESSVAKNYEQDPEIVCTIPSKFQETQHSEITPSQDEEMRNNKAASKRVSLHKNEAMEPNNILEECTVLKSLSSVVFDDPIDKLPEGCSSMETNIKISIAERAKPEMSRMVPLIHITFPVDGSPKEPVIAKPSLQTRKGTIHNNHSVNIPVHQENDKHKMNSHRSKLDSKTKTSKKTPQNFVISTEGPIKPTMHKTSIKTQIFPALGLVDPRPWQLPRFQKKMPQIAKKQSTHRTQKPKKQSFPCICKNPGTQKSCVPLSVQPTEPRLNYLDLKYSDMFKEINSTANGPGIYEMFGTPVYCHVRETERDENTYYREICSAPSGRRITNKCRSSHSERKSNIRTRLSQKKTHMKCPKTSFGIKQEHKVLISKEKSSKAVHSNLHDIENGDGISEPDWQIKSSGNEFLSSKDEIHPMNLAQTPEQSMKQNEFPPVSDLSIVEEVSMEESTGDRDISNNQILTTSLRDLQELEELHHQIPFIPSEDSWAVPSEKNSNKYVQQEKQNTASLSKVNASRILTNDLEFDSVSDHSKTLTNFSFQAKQESASSQTYQYWVHYLDHDSLANKSITYQMFGKTLSGTNSISQEIMDSVNNEELTDELLGCLAAELLALDEKDNNSCQKMANETDPENLNLVLRWRGSTPKEMGRETTKVKIQRHSSGLRIYDREEKFLISNEKKIFSENSLKSEEPILWTKGEILGKGAYGTVYCGLTSQGQLIAVKQVALDTSNKLAAEKEYRKLQEEVDLLKALKHVNIVAYLGTCLQENTVSIFMEFVPGGSISSIINRFGPLPEMVFCKYTKQILQGVAYLHENCVVHRDIKGNNVMLMPTGIIKLIDFGCARRLAWAGLNGTHSDMLKSMHGTPYWMAPEVINESGYGRKSDIWSIGCTVFEMATGKPPLASMDRMAAMFYIGAHRGLMPPLPDHFSENAADFVRMCLTRDQHERPSALQLLKHSFLERSH.

The span at 1–19 shows a compositional bias: basic and acidic residues; it reads MSSMPKPERHAESLLDICH. 4 disordered regions span residues 1–28, 44–74, 344–380, and 524–561; these read MSSMPKPERHAESLLDICHDTNSSPTDL, RSEEFDQDGDCSHSTLVNEEEDPSGGRQDWQ, VREEDIDCHGSKTRKPEEENSQYLSSRKNESSVAKNY, and QENDKHKMNSHRSKLDSKTKTSKKTPQNFVISTEGPIK. Basic and acidic residues predominate over residues 344–361; the sequence is VREEDIDCHGSKTRKPEE. The span at 364-377 shows a compositional bias: polar residues; the sequence is SQYLSSRKNESSVA. Positions 524–542 are enriched in basic and acidic residues; sequence QENDKHKMNSHRSKLDSKT. The region spanning 1061–1324 is the Protein kinase domain; it reads WTKGEILGKG…ALQLLKHSFL (264 aa). ATP contacts are provided by residues 1067 to 1075 and lysine 1089; that span reads LGKGAYGTV. Aspartate 1186 functions as the Proton acceptor in the catalytic mechanism.

The protein belongs to the protein kinase superfamily. STE Ser/Thr protein kinase family. STE20 subfamily.

It catalyses the reaction L-seryl-[protein] + ATP = O-phospho-L-seryl-[protein] + ADP + H(+). The catalysed reaction is L-threonyl-[protein] + ATP = O-phospho-L-threonyl-[protein] + ADP + H(+). This chain is Mitogen-activated protein kinase kinase kinase 19 (MAP3K19), found in Homo sapiens (Human).